A 400-amino-acid polypeptide reads, in one-letter code: MGAPLSTTRRGMGQNLSVPNPLGFFPDHQLDPLFRANSSSPDWDFNTNKDSWPMANKVGVGGYGPGFTPPHGGLLGWSPQAQGVLTTLPADPPPASTNRRSGRKPTPVSPPLRDTHPQAMQWNSTQFHQALLDPRVRALYFPAGGSSSGTQNPAPTIASLTSSIFSKTGGPAMNMDNITSGLLGPLLVLQAVCFLLTKILTIPQSLDSWWTSLNFLGGLPGCPGQNSQSPTSNHLPTSCPPTCPGYRWMCLRRFIIFLFILLLCLIFLLVLLDYQGMLPVCPLLPGSTTTSTGPCKTCTTLAQGTSMFPSCCCSKPSDGNCTCIPIPSSWALGKYLWEWASARFSWLSLLVQFVQWCVGLSPTVWLLVIWMIWYWGPNLCSILSPFIPLLPIFCYLWVSI.

Methionine 1 is modified (N-acetylmethionine). Glycine 2 is lipidated: N-myristoyl glycine; by host. The pre-S1 stretch occupies residues 2 to 119; sequence GAPLSTTRRG…PPLRDTHPQA (118 aa). A pre-S region spans residues 2–174; sequence GAPLSTTRRG…FSKTGGPAMN (173 aa). Residues 2 to 181 lie on the Virion surface; in external conformation side of the membrane; it reads GAPLSTTRRG…AMNMDNITSG (180 aa). Topologically, residues 2-253 are intravirion; in internal conformation; sequence GAPLSTTRRG…PGYRWMCLRR (252 aa). N-linked (GlcNAc...) asparagine glycosylation is present at proline 4. The tract at residues 84 to 117 is disordered; the sequence is VLTTLPADPPPASTNRRSGRKPTPVSPPLRDTHP. Residues 120 to 174 are pre-S2; sequence MQWNSTQFHQALLDPRVRALYFPAGGSSSGTQNPAPTIASLTSSIFSKTGGPAMN. A helical membrane pass occupies residues 182–202; that stretch reads LLGPLLVLQAVCFLLTKILTI. Over 203 to 253 the chain is Intravirion; in external conformation; that stretch reads PQSLDSWWTSLNFLGGLPGCPGQNSQSPTSNHLPTSCPPTCPGYRWMCLRR. The chain crosses the membrane as a helical span at residues 254–274; the sequence is FIIFLFILLLCLIFLLVLLDY. Over 275 to 348 the chain is Virion surface; it reads QGMLPVCPLL…WASARFSWLS (74 aa). Residue asparagine 320 is glycosylated (N-linked (GlcNAc...) asparagine; by host). Residues 349 to 369 traverse the membrane as a helical segment; the sequence is LLVQFVQWCVGLSPTVWLLVI. Topologically, residues 370–375 are intravirion; that stretch reads WMIWYW. The helical transmembrane segment at 376–398 threads the bilayer; the sequence is GPNLCSILSPFIPLLPIFCYLWV. Topologically, residues 399-400 are virion surface; that stretch reads SI.

It belongs to the orthohepadnavirus major surface antigen family. As to quaternary structure, in its internal form (Li-HBsAg), interacts with the capsid protein and with the isoform S. Interacts with host chaperone CANX. In terms of assembly, associates with host chaperone CANX through its pre-S2 N glycan; this association may be essential for isoform M proper secretion. Interacts with isoform L. Interacts with the antigens of satellite virus HDV (HDVAgs); this interaction is required for encapsidation of HDV genomic RNA. Isoform M is N-terminally acetylated by host at a ratio of 90%, and N-glycosylated by host at the pre-S2 region. In terms of processing, myristoylated.

The protein localises to the virion membrane. In terms of biological role, the large envelope protein exists in two topological conformations, one which is termed 'external' or Le-HBsAg and the other 'internal' or Li-HBsAg. In its external conformation the protein attaches the virus to cell receptors and thereby initiating infection. This interaction determines the species specificity and liver tropism. This attachment induces virion internalization predominantly through caveolin-mediated endocytosis. The large envelope protein also assures fusion between virion membrane and endosomal membrane. In its internal conformation the protein plays a role in virion morphogenesis and mediates the contact with the nucleocapsid like a matrix protein. Functionally, the middle envelope protein plays an important role in the budding of the virion. It is involved in the induction of budding in a nucleocapsid independent way. In this process the majority of envelope proteins bud to form subviral lipoprotein particles of 22 nm of diameter that do not contain a nucleocapsid. The chain is Large envelope protein from Hepatitis B virus genotype F2 (isolate Brazil/w4B) (HBV-F).